The chain runs to 427 residues: 3-phosphoshikimate 1-carboxyvinyltransferase (427 aa).

Residues Lys20, Ser21, and Arg25 each coordinate 3-phosphoshikimate. Residue Lys20 participates in phosphoenolpyruvate binding. Phosphoenolpyruvate contacts are provided by Gly92 and Arg120. Residues Ser166, Gln168, Asp312, and Lys339 each coordinate 3-phosphoshikimate. Gln168 contributes to the phosphoenolpyruvate binding site. Asp312 serves as the catalytic Proton acceptor. The phosphoenolpyruvate site is built by Arg343 and Arg385.

It belongs to the EPSP synthase family. As to quaternary structure, monomer.

The protein resides in the cytoplasm. The catalysed reaction is 3-phosphoshikimate + phosphoenolpyruvate = 5-O-(1-carboxyvinyl)-3-phosphoshikimate + phosphate. Its pathway is metabolic intermediate biosynthesis; chorismate biosynthesis; chorismate from D-erythrose 4-phosphate and phosphoenolpyruvate: step 6/7. Functionally, catalyzes the transfer of the enolpyruvyl moiety of phosphoenolpyruvate (PEP) to the 5-hydroxyl of shikimate-3-phosphate (S3P) to produce enolpyruvyl shikimate-3-phosphate and inorganic phosphate. The polypeptide is 3-phosphoshikimate 1-carboxyvinyltransferase (Streptococcus pneumoniae serotype 19F (strain G54)).